Here is a 319-residue protein sequence, read N- to C-terminus: MNIILTNPRGFCAGVKRAILIVENALKVYKKTIYIRHELVHNQYVINTLRQKGVVFVEKIEQIPDYSVVIFSAHGVSKKVVQEAVKKKLIILDATCPLVEKVHIEVSKSSEKAIETILIGHRGHPEVEGTIGQYNNKNGKIYLVESIEDVHNLSVQNSKKLNFFTQTTLSITNTKKIIAALKNKFPEISGPNKEDICYATTNRQIAVRQLSKIADIIFVIGSNNSSNSNRLAELGKETGTFTKLISSFLDIKKKWLKNVNYIGITAGASAPEILVTEVIQYLRKIGAHKPIEMIGVREKKIFKIPKKLLNIKTILDENG.

[4Fe-4S] cluster is bound at residue Cys-12. Residues His-41 and His-74 each coordinate (2E)-4-hydroxy-3-methylbut-2-enyl diphosphate. Dimethylallyl diphosphate contacts are provided by His-41 and His-74. Positions 41 and 74 each coordinate isopentenyl diphosphate. Cys-96 is a [4Fe-4S] cluster binding site. His-124 provides a ligand contact to (2E)-4-hydroxy-3-methylbut-2-enyl diphosphate. His-124 is a dimethylallyl diphosphate binding site. Position 124 (His-124) interacts with isopentenyl diphosphate. Glu-126 functions as the Proton donor in the catalytic mechanism. Thr-167 contributes to the (2E)-4-hydroxy-3-methylbut-2-enyl diphosphate binding site. Residue Cys-197 participates in [4Fe-4S] cluster binding. 4 residues coordinate (2E)-4-hydroxy-3-methylbut-2-enyl diphosphate: Ser-225, Ser-226, Asn-227, and Ser-269. Residues Ser-225, Ser-226, Asn-227, and Ser-269 each coordinate dimethylallyl diphosphate. Isopentenyl diphosphate is bound by residues Ser-225, Ser-226, Asn-227, and Ser-269.

It belongs to the IspH family. As to quaternary structure, homodimer. [4Fe-4S] cluster serves as cofactor.

It carries out the reaction isopentenyl diphosphate + 2 oxidized [2Fe-2S]-[ferredoxin] + H2O = (2E)-4-hydroxy-3-methylbut-2-enyl diphosphate + 2 reduced [2Fe-2S]-[ferredoxin] + 2 H(+). The catalysed reaction is dimethylallyl diphosphate + 2 oxidized [2Fe-2S]-[ferredoxin] + H2O = (2E)-4-hydroxy-3-methylbut-2-enyl diphosphate + 2 reduced [2Fe-2S]-[ferredoxin] + 2 H(+). It participates in isoprenoid biosynthesis; dimethylallyl diphosphate biosynthesis; dimethylallyl diphosphate from (2E)-4-hydroxy-3-methylbutenyl diphosphate: step 1/1. It functions in the pathway isoprenoid biosynthesis; isopentenyl diphosphate biosynthesis via DXP pathway; isopentenyl diphosphate from 1-deoxy-D-xylulose 5-phosphate: step 6/6. In terms of biological role, catalyzes the conversion of 1-hydroxy-2-methyl-2-(E)-butenyl 4-diphosphate (HMBPP) into a mixture of isopentenyl diphosphate (IPP) and dimethylallyl diphosphate (DMAPP). Acts in the terminal step of the DOXP/MEP pathway for isoprenoid precursor biosynthesis. This is 4-hydroxy-3-methylbut-2-enyl diphosphate reductase from Buchnera aphidicola subsp. Acyrthosiphon pisum (strain Tuc7).